A 329-amino-acid polypeptide reads, in one-letter code: Malate dehydrogenase (329 aa).

12–18 (GAAGQIG) is a binding site for NAD(+). Substrate contacts are provided by R95 and R101. NAD(+) contacts are provided by residues N108, Q115, and 132–134 (VGN). Substrate is bound by residues N134 and R165. H190 functions as the Proton acceptor in the catalytic mechanism.

This sequence belongs to the LDH/MDH superfamily. MDH type 2 family.

The enzyme catalyses (S)-malate + NAD(+) = oxaloacetate + NADH + H(+). Catalyzes the reversible oxidation of malate to oxaloacetate. The chain is Malate dehydrogenase from Herminiimonas arsenicoxydans.